Here is a 655-residue protein sequence, read N- to C-terminus: Alpha-amylase (655 aa).

The Nucleophile role is filled by glutamate 123. The active-site Proton donor is aspartate 214.

It belongs to the glycosyl hydrolase 57 family.

It catalyses the reaction Endohydrolysis of (1-&gt;4)-alpha-D-glucosidic linkages in polysaccharides containing three or more (1-&gt;4)-alpha-linked D-glucose units.. This is Alpha-amylase (amyA) from Pyrococcus abyssi (strain GE5 / Orsay).